Consider the following 271-residue polypeptide: Secretagogin (271 aa).

EF-hand domains lie at 8–43 (LDAA…LLKK), 53–88 (KVQG…EDEN), 100–135 (DNSV…LFLQ), 144–179 (KLDE…QENF), 192–227 (ERKS…MMEL), and 235–271 (VDLD…KANP). Ca(2+) contacts are provided by Asp-21, Asp-23, Asn-25, Tyr-27, and Glu-32. Ca(2+) is bound by residues Asp-113, Asp-115, Ser-117, Glu-124, Asn-159, Asp-161, Arg-163, Asp-168, Asp-205, Ser-207, Thr-209, Glu-216, Asp-249, Asn-251, Asp-253, Lys-255, and Glu-260.

It localises to the cytoplasm. The sequence is that of Secretagogin (scgn) from Xenopus laevis (African clawed frog).